The chain runs to 459 residues: Disease resistance protein CHL1 (459 aa).

Residues 16 to 170 enclose the TIR domain; that stretch reads REVDVFLSFC…QIARDISLVV (155 aa). Residue Glu89 is part of the active site. The NB-ARC domain occupies 191–401; that stretch reads VYDLLALEVN…LLKLKAKQGG (211 aa). The segment covering 429 to 440 has biased composition (basic and acidic residues); it reads ERKESSQDKSQQ. Positions 429 to 459 are disordered; sequence ERKESSQDKSQQESEVAADILIGKESSQDKQ.

Mostly expressed in leaves, stems and roots, and, to a lower extent, in flowers and siliques.

It localises to the cytoplasm. The catalysed reaction is NAD(+) + H2O = ADP-D-ribose + nicotinamide + H(+). In terms of biological role, confers resistance to low temperatures by limiting chloroplast damage and cell death, thus maintaining growth homeostasis. In Arabidopsis thaliana (Mouse-ear cress), this protein is Disease resistance protein CHL1.